The following is a 159-amino-acid chain: Xanthine dehydrogenase iron-sulfur-binding subunit (159 aa).

A 2Fe-2S ferredoxin-type domain is found at 7-82 (ITIECTINGM…GKEIRTLEGE (76 aa)). C44, C49, and C52 together coordinate [2Fe-2S] cluster.

In terms of assembly, heterotrimer of XdhA, XdhB and XdhC. Requires [2Fe-2S] cluster as cofactor.

It functions in the pathway purine metabolism; hypoxanthine degradation; urate from hypoxanthine: step 1/2. Functionally, iron-sulfur subunit of the xanthine dehydrogenase complex. The chain is Xanthine dehydrogenase iron-sulfur-binding subunit (xdhC) from Escherichia coli O157:H7.